We begin with the raw amino-acid sequence, 144 residues long: Probable nucleoside diphosphate kinase 5 (144 aa).

The ATP site is built by lysine 3, phenylalanine 51, arginine 79, threonine 85, arginine 99, and asparagine 109. Catalysis depends on histidine 112, which acts as the Pros-phosphohistidine intermediate.

It belongs to the NDK family.

It carries out the reaction a 2'-deoxyribonucleoside 5'-diphosphate + ATP = a 2'-deoxyribonucleoside 5'-triphosphate + ADP. It catalyses the reaction a ribonucleoside 5'-diphosphate + ATP = a ribonucleoside 5'-triphosphate + ADP. Functionally, involved in the synthesis of nucleoside triphosphates other than ATP. The ATP gamma phosphate is transferred to the NDP beta phosphate via a ping-pong mechanism, using a phosphorylated active-site intermediate. The protein is Probable nucleoside diphosphate kinase 5 of Arabidopsis thaliana (Mouse-ear cress).